A 218-amino-acid polypeptide reads, in one-letter code: 23 kDa integral membrane protein (218 aa).

The Cytoplasmic portion of the chain corresponds to 1-12 (MATLGTGMRCLK). The chain crosses the membrane as a helical span at residues 13-36 (SCVFILNIICLLCSLVLIGAGAYV). Residues 37-55 (EVKFSQYEANLHKVWQAAP) are Extracellular-facing. A helical transmembrane segment spans residues 56-71 (IAIIVVGVVILIVSFL). Residues 72 to 82 (GCCGAIKENVC) lie on the Cytoplasmic side of the membrane. A helical membrane pass occupies residues 83-108 (MLYMYAFFLIVLLIAELVAAIVAVVY). Residues 109-183 (KDKIDDEINT…SVFSAFLKRN (75 aa)) lie on the Extracellular side of the membrane. The chain crosses the membrane as a helical span at residues 184-205 (LIIVACVAFGVCFFQLLSIVIA). The Cytoplasmic portion of the chain corresponds to 206-218 (CCLGQRIHDYQNV).

It belongs to the tetraspanin (TM4SF) family.

The protein localises to the membrane. This Schistosoma japonicum (Blood fluke) protein is 23 kDa integral membrane protein.